Here is a 429-residue protein sequence, read N- to C-terminus: MQLLAVGLNHTTAPVSLREKVAFPADQLGQAVASARVWYGRSDSKTYSDEAAILSTCNRTELYAASHQPGGVNEAIDLTAHFLADYHKLPYSELRPYLYALPQDNAVRHAFRVASGLDSMVLGEPQILGQMKDAVRQAEAAGGLGTYLHQMFQRTFAVAKEVRSNTEIGAHSVSMAAASVRLSQRIFDTISEQNVLFIGAGEMIELCATHFAAQNPKSLTIANRTLERGETLAHRFNGRAIRLADLPDQLASYDIVISSTASSLPIIGLGMVERAIKARRHKPMFMVDLAVPRDIETEIGRLDDVFLYTVDDLGTFVQTGLENRQAAVTQAEAIIETRVQSFMHWIDARAVVPVIQDLHESSEMMRMIELERARKLLAKGEDIDAVLEALSKGLTAKFLHGPQQALNNAQGDERTRLAALLPQLFRTKR.

Residues Thr-56–Arg-59, Ser-119, Glu-124–Gln-126, and Gln-130 each bind substrate. Cys-57 functions as the Nucleophile in the catalytic mechanism. Gly-199–Ile-204 provides a ligand contact to NADP(+).

The protein belongs to the glutamyl-tRNA reductase family. Homodimer.

It carries out the reaction (S)-4-amino-5-oxopentanoate + tRNA(Glu) + NADP(+) = L-glutamyl-tRNA(Glu) + NADPH + H(+). It functions in the pathway porphyrin-containing compound metabolism; protoporphyrin-IX biosynthesis; 5-aminolevulinate from L-glutamyl-tRNA(Glu): step 1/2. Catalyzes the NADPH-dependent reduction of glutamyl-tRNA(Glu) to glutamate 1-semialdehyde (GSA). This Herminiimonas arsenicoxydans protein is Glutamyl-tRNA reductase.